A 325-amino-acid chain; its full sequence is NADH-quinone oxidoreductase subunit H (325 aa).

8 helical membrane-spanning segments follow: residues 11 to 31, 81 to 101, 114 to 134, 154 to 174, 186 to 206, 237 to 257, 265 to 285, and 304 to 324; these read ILLT…CGAF, VIFT…FAIV, IGIL…LFAG, LSYE…AGSF, VWNV…GVAV, FFVG…TLFF, LPPF…FILI, and ICLP…LWQA.

It belongs to the complex I subunit 1 family. In terms of assembly, NDH-1 is composed of 13 different subunits. Subunits NuoA, H, J, K, L, M, N constitute the membrane sector of the complex.

It is found in the cell inner membrane. The catalysed reaction is a quinone + NADH + 5 H(+)(in) = a quinol + NAD(+) + 4 H(+)(out). In terms of biological role, NDH-1 shuttles electrons from NADH, via FMN and iron-sulfur (Fe-S) centers, to quinones in the respiratory chain. The immediate electron acceptor for the enzyme in this species is believed to be ubiquinone. Couples the redox reaction to proton translocation (for every two electrons transferred, four hydrogen ions are translocated across the cytoplasmic membrane), and thus conserves the redox energy in a proton gradient. This subunit may bind ubiquinone. The polypeptide is NADH-quinone oxidoreductase subunit H (Shigella flexneri serotype 5b (strain 8401)).